We begin with the raw amino-acid sequence, 957 residues long: Glycine dehydrogenase (decarboxylating) (957 aa).

An N6-(pyridoxal phosphate)lysine modification is found at Lys-708.

The protein belongs to the GcvP family. As to quaternary structure, the glycine cleavage system is composed of four proteins: P, T, L and H. The cofactor is pyridoxal 5'-phosphate.

It carries out the reaction N(6)-[(R)-lipoyl]-L-lysyl-[glycine-cleavage complex H protein] + glycine + H(+) = N(6)-[(R)-S(8)-aminomethyldihydrolipoyl]-L-lysyl-[glycine-cleavage complex H protein] + CO2. In terms of biological role, the glycine cleavage system catalyzes the degradation of glycine. The P protein binds the alpha-amino group of glycine through its pyridoxal phosphate cofactor; CO(2) is released and the remaining methylamine moiety is then transferred to the lipoamide cofactor of the H protein. In Salmonella agona (strain SL483), this protein is Glycine dehydrogenase (decarboxylating).